Reading from the N-terminus, the 365-residue chain is Aminomethyltransferase (365 aa).

This sequence belongs to the GcvT family. In terms of assembly, the glycine cleavage system is composed of four proteins: P, T, L and H.

The catalysed reaction is N(6)-[(R)-S(8)-aminomethyldihydrolipoyl]-L-lysyl-[protein] + (6S)-5,6,7,8-tetrahydrofolate = N(6)-[(R)-dihydrolipoyl]-L-lysyl-[protein] + (6R)-5,10-methylene-5,6,7,8-tetrahydrofolate + NH4(+). In terms of biological role, the glycine cleavage system catalyzes the degradation of glycine. The sequence is that of Aminomethyltransferase from Desulfitobacterium hafniense (strain DSM 10664 / DCB-2).